A 326-amino-acid polypeptide reads, in one-letter code: Tagatose 1,6-diphosphate aldolase 2 (326 aa).

Belongs to the aldolase LacD family.

The enzyme catalyses D-tagatofuranose 1,6-bisphosphate = D-glyceraldehyde 3-phosphate + dihydroxyacetone phosphate. The protein operates within carbohydrate metabolism; D-tagatose 6-phosphate degradation; D-glyceraldehyde 3-phosphate and glycerone phosphate from D-tagatose 6-phosphate: step 2/2. This Streptococcus agalactiae serotype III (strain NEM316) protein is Tagatose 1,6-diphosphate aldolase 2 (lacD2).